Reading from the N-terminus, the 590-residue chain is Putative ABC transporter ATP-binding protein MM_3016 (590 aa).

2 ABC transporter domains span residues 11-251 (VRFE…KLGI) and 317-550 (VRIE…AGLI). ATP contacts are provided by residues 45–52 (GPSGCGKS) and 350–357 (GHNGAGKT).

It belongs to the ABC transporter superfamily.

The protein resides in the cell membrane. Probably part of an ABC transporter complex. Responsible for energy coupling to the transport system. This is Putative ABC transporter ATP-binding protein MM_3016 from Methanosarcina mazei (strain ATCC BAA-159 / DSM 3647 / Goe1 / Go1 / JCM 11833 / OCM 88) (Methanosarcina frisia).